The chain runs to 229 residues: Potassium/proton antiporter CemA (229 aa).

3 helical membrane passes run 7–27 (FTPLLYFASIVFLPWWISLSF), 114–134 (IISFVILSGYSIFGNEELVIL), and 190–210 (ISGLVSTFPVILDTLLKYWIF).

This sequence belongs to the CemA family.

Its subcellular location is the plastid. It is found in the chloroplast inner membrane. The enzyme catalyses K(+)(in) + H(+)(out) = K(+)(out) + H(+)(in). In terms of biological role, contributes to K(+)/H(+) antiport activity by supporting proton efflux to control proton extrusion and homeostasis in chloroplasts in a light-dependent manner to modulate photosynthesis. Prevents excessive induction of non-photochemical quenching (NPQ) under continuous-light conditions. Indirectly promotes efficient inorganic carbon uptake into chloroplasts. The sequence is that of Potassium/proton antiporter CemA from Jasminum nudiflorum (Winter jasmine).